Consider the following 463-residue polypeptide: Endoglucanase (463 aa).

An N-terminal signal peptide occupies residues 1–27 (MVEKRKIFTVLCACGIGFTSYTSCISA). Residues 28 to 55 (AAIDNDTLINNGHKINSSIITNSSQVSA) constitute a propeptide that is removed on maturation. Residue Glu-130 is the Proton donor of the active site. Asp-191 acts as the Nucleophile in catalysis.

The protein belongs to the glycosyl hydrolase 8 (cellulase D) family. The N- and the C-terminus may be subjected to proteolysis.

It carries out the reaction Endohydrolysis of (1-&gt;4)-beta-D-glucosidic linkages in cellulose, lichenin and cereal beta-D-glucans.. The chain is Endoglucanase from Bacillus sp. (strain KSM-330).